Reading from the N-terminus, the 400-residue chain is Nicotinate phosphoribosyltransferase (400 aa).

Phosphohistidine; by autocatalysis is present on H220.

It belongs to the NAPRTase family. Transiently phosphorylated on a His residue during the reaction cycle. Phosphorylation strongly increases the affinity for substrates and increases the rate of nicotinate D-ribonucleotide production. Dephosphorylation regenerates the low-affinity form of the enzyme, leading to product release.

The catalysed reaction is nicotinate + 5-phospho-alpha-D-ribose 1-diphosphate + ATP + H2O = nicotinate beta-D-ribonucleotide + ADP + phosphate + diphosphate. Its pathway is cofactor biosynthesis; NAD(+) biosynthesis; nicotinate D-ribonucleotide from nicotinate: step 1/1. Catalyzes the synthesis of beta-nicotinate D-ribonucleotide from nicotinate and 5-phospho-D-ribose 1-phosphate at the expense of ATP. The chain is Nicotinate phosphoribosyltransferase from Salmonella choleraesuis (strain SC-B67).